Consider the following 575-residue polypeptide: Carboxylesterase 5A (575 aa).

A signal peptide spans 1 to 28 (MSGDWVRPGQALIWVIWIFGAIIEGSVT). An intrachain disulfide couples cysteine 94 to cysteine 121. Asparagine 134 carries an N-linked (GlcNAc...) asparagine glycan. The active-site Acyl-ester intermediate is serine 226. Residues cysteine 280 and cysteine 291 are joined by a disulfide bond. An N-linked (GlcNAc...) asparagine glycan is attached at asparagine 281. The active-site Charge relay system is the glutamate 345. Asparagine 363 carries an N-linked (GlcNAc...) asparagine glycan. Histidine 454 acts as the Charge relay system in catalysis. Asparagine 524 carries N-linked (GlcNAc...) asparagine glycosylation.

Belongs to the type-B carboxylesterase/lipase family. In terms of processing, N-glycosylated.

Its subcellular location is the secreted. It carries out the reaction a carboxylic ester + H2O = an alcohol + a carboxylate + H(+). Functionally, involved in the detoxification of xenobiotics and in the activation of ester and amide prodrugs. The sequence is that of Carboxylesterase 5A (Ces5a) from Mus musculus (Mouse).